A 64-amino-acid polypeptide reads, in one-letter code: Large ribosomal subunit protein bL33 (64 aa).

Belongs to the bacterial ribosomal protein bL33 family.

The sequence is that of Large ribosomal subunit protein bL33 from Rippkaea orientalis (strain PCC 8801 / RF-1) (Cyanothece sp. (strain PCC 8801)).